A 953-amino-acid chain; its full sequence is E3 ubiquitin-protein ligase ZNF598 (953 aa).

The segment covering 25–39 (KPSKSTRIKPTKPHH) has biased composition (basic residues). The tract at residues 25–47 (KPSKSTRIKPTKPHHTPSNSMES) is disordered. The RING-type zinc-finger motif lies at 57–97 (CVLCCQDIDLFAVGKCDHPVCYRCSTKMRVLCEQKYCAVCR). Residues 215-238 (PLCKFCDDRYLDNDELLKHLRRDH) form a C2H2-type zinc finger. Disordered regions lie at residues 299–779 (SKNR…EDSS) and 884–911 (EKQQ…SSLD). Over residues 371 to 380 (AAAMRASMAS) the composition is skewed to low complexity. Residues 381 to 409 (HQEERSHAQERSMLKPRREEKLEPDETRN) are compositionally biased toward basic and acidic residues. Polar residues-rich tracts occupy residues 410-431 (NRST…NGSL) and 467-483 (LSGS…YTNQ). Ser-489 is subject to Phosphoserine. Low complexity-rich tracts occupy residues 508–518 (QSSAASAWSQA) and 536–553 (MTPM…PLPS). Polar residues-rich tracts occupy residues 555 to 564 (SVPQPLTASS) and 641 to 650 (LGSPSHTPET). Basic and acidic residues predominate over residues 655–666 (AHKENVPEKKPP). The span at 695 to 711 (SCTSFPENITSSKQPVT) shows a compositional bias: polar residues. The segment covering 747-765 (LPPPPPPGLGPAVSKPPPG) has biased composition (pro residues). A compositionally biased stretch (polar residues) spans 770–779 (PLNSNVEDSS).

This sequence belongs to the ZNF598/HEL2 family.

The protein localises to the cytoplasm. Its subcellular location is the cytosol. The catalysed reaction is S-ubiquitinyl-[E2 ubiquitin-conjugating enzyme]-L-cysteine + [acceptor protein]-L-lysine = [E2 ubiquitin-conjugating enzyme]-L-cysteine + N(6)-ubiquitinyl-[acceptor protein]-L-lysine.. The protein operates within protein modification; protein ubiquitination. E3 ubiquitin-protein ligase that plays a key role in the ribosome quality control (RQC), a pathway that takes place when a ribosome has stalled during translation, leading to degradation of nascent peptide chains. ZNF598 is activated when ribosomes are stalled within an mRNA following translation of prematurely polyadenylated mRNAs. Acts as a ribosome collision sensor: specifically recognizes and binds collided di-ribosome, which arises when a trailing ribosome encounters a slower leading ribosome, leading to terminally arrest translation. Following binding to colliding ribosomes, mediates monoubiquitination of 40S ribosomal proteins RPS10/eS10 and RPS3/uS3, and 'Lys-63'-linked polyubiquitination of RPS20/uS10. Polyubiquitination of RPS20/uS10 promotes recruitment of the RQT (ribosome quality control trigger) complex, which drives the disassembly of stalled ribosomes, followed by degradation of nascent peptides. The chain is E3 ubiquitin-protein ligase ZNF598 from Danio rerio (Zebrafish).